The primary structure comprises 130 residues: Small ribosomal subunit protein uS11 (130 aa).

Belongs to the universal ribosomal protein uS11 family. Part of the 30S ribosomal subunit. Interacts with proteins S7 and S18. Binds to IF-3.

Located on the platform of the 30S subunit, it bridges several disparate RNA helices of the 16S rRNA. Forms part of the Shine-Dalgarno cleft in the 70S ribosome. The protein is Small ribosomal subunit protein uS11 of Prochlorococcus marinus (strain NATL2A).